Here is a 206-residue protein sequence, read N- to C-terminus: Large ribosomal subunit protein uL4 (206 aa).

The disordered stretch occupies residues 43–78 (ARSGNRKQKDREEVKHTTKKPWRQKGTGRARAGMSS). A compositionally biased stretch (basic and acidic residues) spans 49 to 58 (KQKDREEVKH). Over residues 59-70 (TTKKPWRQKGTG) the composition is skewed to basic residues.

This sequence belongs to the universal ribosomal protein uL4 family. Part of the 50S ribosomal subunit.

In terms of biological role, one of the primary rRNA binding proteins, this protein initially binds near the 5'-end of the 23S rRNA. It is important during the early stages of 50S assembly. It makes multiple contacts with different domains of the 23S rRNA in the assembled 50S subunit and ribosome. Its function is as follows. Forms part of the polypeptide exit tunnel. The protein is Large ribosomal subunit protein uL4 of Ralstonia pickettii (strain 12J).